The following is a 201-amino-acid chain: MEYLIGIQGPDYVLVASDRVAASNIVQMKDDHDKMFKMSEKILLLCVGEAGDTVQFAEYIQKNVQLYKMRNGYELSPTAAANFTRRNLADCLRSRTPYHVNLLLAGYDEHEGPALYYMDYLAALAKAPFAAHGYGAFLTLSILDRYYTPTISRERAVELLRKCLEELQKRFILNLPTFSVRVIDKDGIHNLENIAFPKRDS.

Met1 bears the N-acetylmethionine mark.

Belongs to the peptidase T1B family. In terms of assembly, the 26S proteasome consists of a 20S proteasome core and two 19S regulatory subunits. The 20S proteasome core is a barrel-shaped complex made of 28 subunits that are arranged in four stacked rings. The two outer rings are each formed by seven alpha subunits, and the two inner rings are formed by seven beta subunits. The proteolytic activity is exerted by three beta-subunits PSMB5, PSMB6 and PSMB7. Detected in liver (at protein level).

It localises to the cytoplasm. The protein resides in the nucleus. Its function is as follows. Non-catalytic component of the 20S core proteasome complex involved in the proteolytic degradation of most intracellular proteins. This complex plays numerous essential roles within the cell by associating with different regulatory particles. Associated with two 19S regulatory particles, forms the 26S proteasome and thus participates in the ATP-dependent degradation of ubiquitinated proteins. The 26S proteasome plays a key role in the maintenance of protein homeostasis by removing misfolded or damaged proteins that could impair cellular functions, and by removing proteins whose functions are no longer required. Associated with the PA200 or PA28, the 20S proteasome mediates ubiquitin-independent protein degradation. This type of proteolysis is required in several pathways including spermatogenesis (20S-PA200 complex) or generation of a subset of MHC class I-presented antigenic peptides (20S-PA28 complex). The protein is Proteasome subunit beta type-2 (Psmb2) of Mus musculus (Mouse).